The sequence spans 444 residues: L-cysteine:1D-myo-inositol 2-amino-2-deoxy-alpha-D-glucopyranoside ligase (444 aa).

Cysteine 66 is a binding site for Zn(2+). L-cysteinyl-5'-AMP-binding positions include 66 to 69 (CGIT), threonine 81, and 104 to 106 (NVT). Positions 68-78 (ITPYDATHLGH) match the 'HIGH' region motif. A 'ERGGDP' region motif is present at residues 206-211 (EHGGDP). Tryptophan 246 contributes to the L-cysteinyl-5'-AMP binding site. Zn(2+) is bound at residue cysteine 250. 268 to 270 (GSD) contributes to the L-cysteinyl-5'-AMP binding site. Histidine 275 contacts Zn(2+). L-cysteinyl-5'-AMP is bound at residue valine 302. A 'KMSKS' region motif is present at residues 308 to 312 (KMSKS).

Belongs to the class-I aminoacyl-tRNA synthetase family. MshC subfamily. Monomer. Zn(2+) is required as a cofactor.

It catalyses the reaction 1D-myo-inositol 2-amino-2-deoxy-alpha-D-glucopyranoside + L-cysteine + ATP = 1D-myo-inositol 2-(L-cysteinylamino)-2-deoxy-alpha-D-glucopyranoside + AMP + diphosphate + H(+). Its function is as follows. Catalyzes the ATP-dependent condensation of GlcN-Ins and L-cysteine to form L-Cys-GlcN-Ins. The chain is L-cysteine:1D-myo-inositol 2-amino-2-deoxy-alpha-D-glucopyranoside ligase from Parafrankia sp. (strain EAN1pec).